We begin with the raw amino-acid sequence, 453 residues long: tRNA modification GTPase MnmE (453 aa).

Residues Arg23, Glu80, and Lys120 each coordinate (6S)-5-formyl-5,6,7,8-tetrahydrofolate. The 160-residue stretch at Gly216–Cys375 folds into the TrmE-type G domain. Asn226 provides a ligand contact to K(+). Residues Asn226 to Ser231, Thr245 to Thr251, and Asp270 to Gly273 each bind GTP. Mg(2+) is bound at residue Ser230. Residues Thr245, Ile247, and Thr250 each coordinate K(+). Thr251 is a Mg(2+) binding site. Residue Lys453 participates in (6S)-5-formyl-5,6,7,8-tetrahydrofolate binding.

The protein belongs to the TRAFAC class TrmE-Era-EngA-EngB-Septin-like GTPase superfamily. TrmE GTPase family. In terms of assembly, homodimer. Heterotetramer of two MnmE and two MnmG subunits. It depends on K(+) as a cofactor.

Its subcellular location is the cytoplasm. Exhibits a very high intrinsic GTPase hydrolysis rate. Involved in the addition of a carboxymethylaminomethyl (cmnm) group at the wobble position (U34) of certain tRNAs, forming tRNA-cmnm(5)s(2)U34. This Wigglesworthia glossinidia brevipalpis protein is tRNA modification GTPase MnmE.